Consider the following 184-residue polypeptide: Large ribosomal subunit protein uL5 (184 aa).

Belongs to the universal ribosomal protein uL5 family. In terms of assembly, part of the 50S ribosomal subunit; part of the 5S rRNA/L5/L18/L25 subcomplex. Contacts the 5S rRNA and the P site tRNA. Forms a bridge to the 30S subunit in the 70S ribosome.

In terms of biological role, this is one of the proteins that bind and probably mediate the attachment of the 5S RNA into the large ribosomal subunit, where it forms part of the central protuberance. In the 70S ribosome it contacts protein S13 of the 30S subunit (bridge B1b), connecting the 2 subunits; this bridge is implicated in subunit movement. Contacts the P site tRNA; the 5S rRNA and some of its associated proteins might help stabilize positioning of ribosome-bound tRNAs. This chain is Large ribosomal subunit protein uL5, found in Agrobacterium fabrum (strain C58 / ATCC 33970) (Agrobacterium tumefaciens (strain C58)).